Consider the following 72-residue polypeptide: Translation initiation factor IF-1 (72 aa).

Positions 1–72 (MPKEEVLEFP…TKGRITYRFK (72 aa)) constitute an S1-like domain.

It belongs to the IF-1 family. Component of the 30S ribosomal translation pre-initiation complex which assembles on the 30S ribosome in the order IF-2 and IF-3, IF-1 and N-formylmethionyl-tRNA(fMet); mRNA recruitment can occur at any time during PIC assembly.

It is found in the cytoplasm. Functionally, one of the essential components for the initiation of protein synthesis. Stabilizes the binding of IF-2 and IF-3 on the 30S subunit to which N-formylmethionyl-tRNA(fMet) subsequently binds. Helps modulate mRNA selection, yielding the 30S pre-initiation complex (PIC). Upon addition of the 50S ribosomal subunit IF-1, IF-2 and IF-3 are released leaving the mature 70S translation initiation complex. This chain is Translation initiation factor IF-1, found in Rhizobium etli (strain ATCC 51251 / DSM 11541 / JCM 21823 / NBRC 15573 / CFN 42).